We begin with the raw amino-acid sequence, 147 residues long: D-aminoacyl-tRNA deacylase (147 aa).

A Gly-cisPro motif, important for rejection of L-amino acids motif is present at residues 137–138 (GP).

It belongs to the DTD family. As to quaternary structure, homodimer.

Its subcellular location is the cytoplasm. The enzyme catalyses glycyl-tRNA(Ala) + H2O = tRNA(Ala) + glycine + H(+). The catalysed reaction is a D-aminoacyl-tRNA + H2O = a tRNA + a D-alpha-amino acid + H(+). Functionally, an aminoacyl-tRNA editing enzyme that deacylates mischarged D-aminoacyl-tRNAs. Also deacylates mischarged glycyl-tRNA(Ala), protecting cells against glycine mischarging by AlaRS. Acts via tRNA-based rather than protein-based catalysis; rejects L-amino acids rather than detecting D-amino acids in the active site. By recycling D-aminoacyl-tRNA to D-amino acids and free tRNA molecules, this enzyme counteracts the toxicity associated with the formation of D-aminoacyl-tRNA entities in vivo and helps enforce protein L-homochirality. This Bacillus velezensis (strain DSM 23117 / BGSC 10A6 / LMG 26770 / FZB42) (Bacillus amyloliquefaciens subsp. plantarum) protein is D-aminoacyl-tRNA deacylase.